Here is a 372-residue protein sequence, read N- to C-terminus: Aminomethyltransferase (372 aa).

Belongs to the GcvT family. As to quaternary structure, the glycine cleavage system is composed of four proteins: P, T, L and H.

The catalysed reaction is N(6)-[(R)-S(8)-aminomethyldihydrolipoyl]-L-lysyl-[protein] + (6S)-5,6,7,8-tetrahydrofolate = N(6)-[(R)-dihydrolipoyl]-L-lysyl-[protein] + (6R)-5,10-methylene-5,6,7,8-tetrahydrofolate + NH4(+). In terms of biological role, the glycine cleavage system catalyzes the degradation of glycine. The polypeptide is Aminomethyltransferase (Synechococcus elongatus (strain ATCC 33912 / PCC 7942 / FACHB-805) (Anacystis nidulans R2)).